Reading from the N-terminus, the 806-residue chain is Plasminogen (806 aa).

Positions 1 to 19 are cleaved as a signal peptide; sequence MEYGKVIFLFLLFLKSGQG. Residues 20–98 enclose the PAN domain; the sequence is ESLENYIKTE…RDVVLFEKRI (79 aa). Disulfide bonds link Cys49–Cys73, Cys53–Cys61, Cys103–Cys181, Cys124–Cys164, Cys152–Cys176, Cys185–Cys262, Cys188–Cys316, Cys206–Cys245, Cys234–Cys257, Cys275–Cys352, Cys296–Cys335, Cys324–Cys347, Cys371–Cys448, Cys392–Cys431, Cys420–Cys443, Cys476–Cys555, Cys497–Cys538, Cys526–Cys550, Cys563–Cys681, Cys573–Cys581, and Cys603–Cys619. Kringle domains lie at 102–181, 184–262, 274–352, 370–448, and 475–555; these read DCKS…VPEC, ECMH…IPRC, QCLK…IPSC, ECYE…LEKC, and DCMY…IPQC. The Peptidase S1 domain maps to 577–804; sequence IVGGCYAQPH…YISWIEDVMK (228 aa). Residue Ser593 is modified to Phosphoserine. Active-site charge relay system residues include His618 and Asp661. Ser684 is subject to Phosphoserine. Disulfide bonds link Cys695–Cys762, Cys725–Cys741, and Cys752–Cys780. Ser756 (charge relay system) is an active-site residue.

This sequence belongs to the peptidase S1 family. Plasminogen subfamily. In terms of assembly, interacts with CSPG4 and AMOT. Interacts (via the Kringle domains) with HRG; the interaction tethers PLG to the cell surface and enhances its activation. Interacts (via Kringle 4 domain) with ADA; the interaction stimulates PLG activation when in complex with DPP4. Angiostatin: Interacts with ATP5F1A; the interaction inhibits most of the angiogenic effects of angiostatin. Post-translationally, in the presence of the inhibitor, the activation involves only cleavage after Arg-576, yielding two chains held together by two disulfide bonds. In the absence of the inhibitor, the activation involves additionally the removal of the activation peptide.

The protein resides in the secreted. The enzyme catalyses Preferential cleavage: Lys-|-Xaa &gt; Arg-|-Xaa, higher selectivity than trypsin. Converts fibrin into soluble products.. Its activity is regulated as follows. Converted into plasmin by plasminogen activators, both plasminogen and its activator being bound to fibrin. Activated with catalytic amounts of streptokinase. Functionally, plasmin dissolves the fibrin of blood clots and acts as a proteolytic factor in a variety of other processes including embryonic development, tissue remodeling, tumor invasion, and inflammation. In ovulation, weakens the walls of the Graafian follicle. It activates the urokinase-type plasminogen activator, collagenases and several complement zymogens, such as C1, C4 and C5. Cleavage of fibronectin and laminin leads to cell detachment and apoptosis. Also cleaves fibrin, thrombospondin and von Willebrand factor. Its role in tissue remodeling and tumor invasion may be modulated by CSPG4. Binds to cells. The chain is Plasminogen (PLG) from Notamacropus eugenii (Tammar wallaby).